Consider the following 149-residue polypeptide: Protein SprT-like (149 aa).

A SprT-like domain is found at 4 to 143; sequence TDYVKQVSLE…CGLCRGKLLL (140 aa). His64 contributes to the Zn(2+) binding site. Residue Glu65 is part of the active site. His68 is a binding site for Zn(2+).

The protein belongs to the SprT family. It depends on Zn(2+) as a cofactor.

Its subcellular location is the cytoplasm. The polypeptide is Protein SprT-like (Streptococcus pneumoniae (strain Taiwan19F-14)).